The sequence spans 425 residues: Protein UL117 (425 aa).

A disordered region spans residues 59 to 83; sequence PTTTSSSLAPPRDDERRPTPPLRPP.

This sequence belongs to the herpesviridae U84 family.

It is found in the host nucleus. Its function is as follows. Plays a role in the inhibition of host DNA replication in the infected cell. Targets the mini-chromosome maintenance (MCM) complex and blocks the accumulation of MCM proteins and their loading onto host chromatin. The protein is Protein UL117 (UL117) of Homo sapiens (Human).